We begin with the raw amino-acid sequence, 407 residues long: Transmembrane protein 184B (407 aa).

Positions 1–28 are enriched in low complexity; the sequence is MTVRGAALAPDPASPTTTTASPSVSATP. Residues 1–31 form a disordered region; sequence MTVRGAALAPDPASPTTTTASPSVSATPEGS. A run of 7 helical transmembrane segments spans residues 40–60, 84–104, 121–141, 178–198, 214–234, 249–269, and 290–310; these read FLMT…ALLI, ILFI…FFTN, FVIY…SAIM, LQFC…QAFG, VTII…LFYF, FFMV…LAIL, and VAAG…ALAL. The disordered stretch occupies residues 369–395; it reads TLEPGPTWRGGTHSLSRSHSLSGARDN. 3 positions are modified to phosphoserine: Ser388, Ser402, and Ser403.

This sequence belongs to the TMEM184 family.

It is found in the membrane. Functionally, may activate the MAP kinase signaling pathway. In Mus musculus (Mouse), this protein is Transmembrane protein 184B (Tmem184b).